The sequence spans 240 residues: Protein GrpE (240 aa).

Disordered regions lie at residues 1-54 (MSGD…NEAR) and 206-240 (VSMGPGPQDGASSQPAEAPAADAPAEDSGSGDGNG). Residues 215–233 (GASSQPAEAPAADAPAEDS) show a composition bias toward low complexity.

It belongs to the GrpE family. As to quaternary structure, homodimer.

The protein localises to the cytoplasm. In terms of biological role, participates actively in the response to hyperosmotic and heat shock by preventing the aggregation of stress-denatured proteins, in association with DnaK and GrpE. It is the nucleotide exchange factor for DnaK and may function as a thermosensor. Unfolded proteins bind initially to DnaJ; upon interaction with the DnaJ-bound protein, DnaK hydrolyzes its bound ATP, resulting in the formation of a stable complex. GrpE releases ADP from DnaK; ATP binding to DnaK triggers the release of the substrate protein, thus completing the reaction cycle. Several rounds of ATP-dependent interactions between DnaJ, DnaK and GrpE are required for fully efficient folding. The sequence is that of Protein GrpE from Synechococcus sp. (strain WH7803).